The primary structure comprises 255 residues: uncharacterized protein (255 aa).

The HTH deoR-type domain maps to 3–58 (PVERRQIILEMVAEKGIVSIAELTDRMNVSHMTIRRDLQKLEQQGAVVLVSGGVQS). The H-T-H motif DNA-binding region spans 20–39 (VSIAELTDRMNVSHMTIRRD).

This is an uncharacterized protein from Escherichia coli (strain K12).